Reading from the N-terminus, the 148-residue chain is Putative nickel-responsive regulator (148 aa).

Ni(2+)-binding residues include histidine 88, histidine 99, histidine 101, and cysteine 107.

This sequence belongs to the transcriptional regulatory CopG/NikR family. It depends on Ni(2+) as a cofactor.

In terms of biological role, transcriptional regulator. The chain is Putative nickel-responsive regulator from Helicobacter pylori (strain HPAG1).